The chain runs to 623 residues: Serine/threonine-protein kinase ArnS (623 aa).

The next 2 helical transmembrane spans lie at 13-33 (MILISVFSYVLIALIVLGIVL) and 49-69 (VYLIGLTVYLNPGFSLTQSLI). In terms of domain architecture, Protein kinase spans 317 to 623 (YRVIEVIGLG…SYDIVKILEG (307 aa)). Residues 323-331 (IGLGGNGYV) and Lys344 contribute to the ATP site. Catalysis depends on Asp460, which acts as the Proton acceptor.

It belongs to the protein kinase superfamily. Ser/Thr protein kinase family. Post-translationally, autophosphorylated.

It is found in the cell membrane. The enzyme catalyses L-seryl-[protein] + ATP = O-phospho-L-seryl-[protein] + ADP + H(+). It catalyses the reaction L-threonyl-[protein] + ATP = O-phospho-L-threonyl-[protein] + ADP + H(+). With respect to regulation, autophosphorylation is stimulated by Mn(2+). Functionally, plays an essential role in the controlled expression of archaellum components during starvation-induced motility. May inhibit arnR transcription and promote ArnR translation. The polypeptide is Serine/threonine-protein kinase ArnS (Sulfolobus acidocaldarius (strain ATCC 33909 / DSM 639 / JCM 8929 / NBRC 15157 / NCIMB 11770)).